Consider the following 447-residue polypeptide: Argininosuccinate synthase (447 aa).

ATP-binding positions include 20–28 (AFSGGLDTS) and A46. Y102 provides a ligand contact to L-citrulline. The ATP site is built by G132 and T134. Positions 134, 138, and 139 each coordinate L-aspartate. Position 138 (N138) interacts with L-citrulline. D139 lines the ATP pocket. L-citrulline-binding residues include R142 and S195. D197 is a binding site for ATP. The L-citrulline site is built by T204, E206, and E283.

Belongs to the argininosuccinate synthase family. Type 2 subfamily. In terms of assembly, homotetramer.

It is found in the cytoplasm. It catalyses the reaction L-citrulline + L-aspartate + ATP = 2-(N(omega)-L-arginino)succinate + AMP + diphosphate + H(+). It participates in amino-acid biosynthesis; L-arginine biosynthesis; L-arginine from L-ornithine and carbamoyl phosphate: step 2/3. In Neisseria gonorrhoeae (strain ATCC 700825 / FA 1090), this protein is Argininosuccinate synthase.